The following is a 510-amino-acid chain: Membrane-bound transcription factor site-2 protease (510 aa).

Residues methionine 1–proline 3 lie on the Cytoplasmic side of the membrane. Residues valine 4–leucine 24 form a helical membrane-spanning segment. Topologically, residues lysine 25–glutamine 74 are lumenal. Helical transmembrane passes span tryptophan 75–glycine 95 and lysine 96–alanine 107. At aspartate 108–glutamine 135 the chain is on the lumenal side. Residues valine 136–valine 160 traverse the membrane as a helical segment. Residue histidine 162 coordinates Zn(2+). Glutamate 163 is an active-site residue. 3 consecutive transmembrane segments (helical) span residues glycine 165–phenylalanine 177, asparagine 178–leucine 200, and phenylalanine 220–tyrosine 242. Zn(2+) is bound at residue histidine 166. Residues threonine 243–lysine 437 lie on the Lumenal side of the membrane. N-linked (GlcNAc...) asparagine glycosylation occurs at asparagine 328. The next 2 membrane-spanning stretches (helical) occupy residues tyrosine 438–phenylalanine 455 and alanine 456–leucine 467. Residues aspartate 468–leucine 483 lie on the Lumenal side of the membrane. The chain crosses the membrane as a helical span at residues isoleucine 484–leucine 504. At tryptophan 505 to arginine 510 the chain is on the cytoplasmic side.

It belongs to the peptidase M50A family. It depends on Zn(2+) as a cofactor.

The protein resides in the membrane. It localises to the cytoplasm. It is found in the golgi apparatus membrane. The enzyme catalyses Cleaves several transcription factors that are type-2 transmembrane proteins within membrane-spanning domains. Known substrates include sterol regulatory element-binding protein (SREBP) -1, SREBP-2 and forms of the transcriptional activator ATF6. SREBP-2 is cleaved at the site 477-DRSRILL-|-CVLTFLCLSFNPLTSLLQWGGA-505. The residues Asn-Pro, 11 residues distal to the site of cleavage in the membrane-spanning domain, are important for cleavage by S2P endopeptidase. Replacement of either of these residues does not prevent cleavage, but there is no cleavage if both of these residues are replaced.. Zinc metalloprotease that mediates intramembrane proteolysis of proteins such as ATF6, ATF6B, SREBF1/SREBP1 and SREBF2/SREBP2. Catalyzes the second step in the proteolytic activation of the sterol regulatory element-binding proteins (SREBPs) SREBF1/SREBP1 and SREBF2/SREBP2: cleaves SREBPs within the first transmembrane segment, thereby releasing the N-terminal segment with a portion of the transmembrane segment attached. Mature N-terminal SREBP fragments shuttle to the nucleus and activate gene transcription. Also mediates the second step in the proteolytic activation of the cyclic AMP-dependent transcription factor ATF-6 (ATF6 and ATF6B). Involved in intramembrane proteolysis during bone formation. In astrocytes and osteoblasts, upon DNA damage and ER stress, mediates the second step of the regulated intramembrane proteolytic activation of the transcription factor CREB3L1, leading to the inhibition of cell-cycle progression. This Cricetulus griseus (Chinese hamster) protein is Membrane-bound transcription factor site-2 protease (MBTPS2).